A 298-amino-acid chain; its full sequence is Nucleotide-binding protein GK3066 (298 aa).

An ATP-binding site is contributed by 17–24 (GMSGAGKT). A GTP-binding site is contributed by 68–71 (DLRS).

The protein belongs to the RapZ-like family.

In terms of biological role, displays ATPase and GTPase activities. This chain is Nucleotide-binding protein GK3066, found in Geobacillus kaustophilus (strain HTA426).